The sequence spans 182 residues: Adenine phosphoribosyltransferase (182 aa).

It belongs to the purine/pyrimidine phosphoribosyltransferase family. In terms of assembly, homodimer.

It localises to the cytoplasm. It catalyses the reaction AMP + diphosphate = 5-phospho-alpha-D-ribose 1-diphosphate + adenine. The protein operates within purine metabolism; AMP biosynthesis via salvage pathway; AMP from adenine: step 1/1. Its function is as follows. Catalyzes a salvage reaction resulting in the formation of AMP, that is energically less costly than de novo synthesis. This chain is Adenine phosphoribosyltransferase, found in Campylobacter hominis (strain ATCC BAA-381 / DSM 21671 / CCUG 45161 / LMG 19568 / NCTC 13146 / CH001A).